The chain runs to 238 residues: Large ribosomal subunit protein uL5c (238 aa).

It belongs to the universal ribosomal protein uL5 family. In terms of assembly, part of the 50S ribosomal subunit; contacts the 5S rRNA.

Its subcellular location is the plastid. It localises to the chloroplast. In terms of biological role, binds 5S rRNA, forms part of the central protuberance of the 50S subunit. The sequence is that of Large ribosomal subunit protein uL5c (rpl5) from Thalassiosira pseudonana (Marine diatom).